The following is a 256-amino-acid chain: Deoxyribose-phosphate aldolase (256 aa).

Asp-102 (proton donor/acceptor) is an active-site residue. Lys-165 functions as the Schiff-base intermediate with acetaldehyde in the catalytic mechanism. Catalysis depends on Lys-197, which acts as the Proton donor/acceptor.

Belongs to the DeoC/FbaB aldolase family. DeoC type 2 subfamily.

Its subcellular location is the cytoplasm. The catalysed reaction is 2-deoxy-D-ribose 5-phosphate = D-glyceraldehyde 3-phosphate + acetaldehyde. It participates in carbohydrate degradation; 2-deoxy-D-ribose 1-phosphate degradation; D-glyceraldehyde 3-phosphate and acetaldehyde from 2-deoxy-alpha-D-ribose 1-phosphate: step 2/2. In terms of biological role, catalyzes a reversible aldol reaction between acetaldehyde and D-glyceraldehyde 3-phosphate to generate 2-deoxy-D-ribose 5-phosphate. In Shewanella baltica (strain OS155 / ATCC BAA-1091), this protein is Deoxyribose-phosphate aldolase.